A 1781-amino-acid polypeptide reads, in one-letter code: Signal-induced proliferation-associated 1-like protein 3 (1781 aa).

Disordered stretches follow at residues 45-166 (SMSQ…FLPL) and 239-332 (TELL…EASR). Residues 54 to 73 (PATATATATATTRPSPTTPA) show a composition bias toward low complexity. Residues 87–97 (PPKREALREHS) are compositionally biased toward basic and acidic residues. Position 100 is a phosphoserine (Ser-100). The segment covering 118–135 (RSIQNGQPPTSTPASSGS) has biased composition (polar residues). A compositionally biased stretch (basic residues) spans 137–146 (AFHRLSRRRS). Ser-146 is modified (phosphoserine). Ser-401 is modified (phosphoserine). The region spanning 611–828 (LLKLDEQGLC…RTRQEYLKDL (218 aa)) is the Rap-GAP domain. The region spanning 966-1042 (DMTLRRNGLG…VKVVIIPPFE (77 aa)) is the PDZ domain. Disordered regions lie at residues 1046–1112 (PRRG…SLSR), 1124–1221 (ESQP…QKPE), 1236–1565 (AGSS…GLEP), and 1583–1636 (TLPA…RLDP). Composition is skewed to polar residues over residues 1080-1111 (APWQ…QSLS) and 1157-1166 (PSGSFSTPGS). Over residues 1196 to 1210 (DGTSSGDSSSGGLTS) the composition is skewed to low complexity. The segment covering 1245–1261 (SRQDAAGKDSPNRHSKG) has biased composition (basic and acidic residues). Positions 1266–1281 (SSHSSSNTLSSNASSS) are enriched in low complexity. A compositionally biased stretch (polar residues) spans 1304–1322 (GGSSDSGIDTTLYTSSPSC). Position 1364 is a phosphoserine (Ser-1364). Thr-1387 is subject to Phosphothreonine. Over residues 1425–1441 (RPSQLAQPSPFQLSASV) the composition is skewed to polar residues. Lys-1448 is modified (N6-acetyllysine). Positions 1509-1518 (TIEDDLKKLI) are enriched in basic and acidic residues. The segment covering 1532-1547 (GQSPQKGLQRTLSDES) has biased composition (polar residues). 2 positions are modified to phosphoserine: Ser-1544 and Ser-1547. The span at 1599–1609 (PGATPAAGSGF) shows a compositional bias: low complexity. 2 positions are modified to phosphoserine: Ser-1619 and Ser-1622. Positions 1625–1635 (DGRDRPLRRLD) are enriched in basic and acidic residues. Ser-1677 carries the post-translational modification Phosphoserine. The tract at residues 1685–1712 (SPVHSHLSLERGPPTPRTTPTMSEEPPL) is disordered. Residues Thr-1699 and Thr-1703 each carry the phosphothreonine modification. Residues 1720–1774 (QLEVMLKQLHTDLQKEKQDKVVLQSEVASLRQNNQRLQEESQAASEQLRKFAEIF) are a coiled coil.

It is found in the apical cell membrane. Functionally, plays a critical role in epithelial cell morphogenesis, polarity, adhesion and cytoskeletal organization in the lens. In Homo sapiens (Human), this protein is Signal-induced proliferation-associated 1-like protein 3 (SIPA1L3).